Reading from the N-terminus, the 529-residue chain is [Pyruvate dehydrogenase [acetyl-transferring]]-phosphatase 2, mitochondrial (529 aa).

A mitochondrion-targeting transit peptide spans 1–66 (MSSTVSYWIL…FTLCKAYRHT (66 aa)). In terms of domain architecture, PPM-type phosphatase spans 106–517 (VLRFESNQLA…DDITVTVVYF (412 aa)). Positions 141, 142, 412, and 508 each coordinate Mn(2+).

Belongs to the PP2C family. It depends on Mg(2+) as a cofactor.

It localises to the mitochondrion. It catalyses the reaction O-phospho-L-seryl-[pyruvate dehydrogenase E1 alpha subunit] + H2O = L-seryl-[pyruvate dehydrogenase E1 alpha subunit] + phosphate. In terms of biological role, mitochondrial enzyme that catalyzes the dephosphorylation and concomitant reactivation of the alpha subunit of the E1 component of the pyruvate dehydrogenase complex (PDC), thereby stimulating the conversion of pyruvate into acetyl-CoA. Acts as a crucial regulator of T cell metabolism and function, with a particular focus on T-helper Th17. The protein is [Pyruvate dehydrogenase [acetyl-transferring]]-phosphatase 2, mitochondrial of Homo sapiens (Human).